The following is a 236-amino-acid chain: Phosphoribosylaminoimidazole-succinocarboxamide synthase (236 aa).

The protein belongs to the SAICAR synthetase family.

It carries out the reaction 5-amino-1-(5-phospho-D-ribosyl)imidazole-4-carboxylate + L-aspartate + ATP = (2S)-2-[5-amino-1-(5-phospho-beta-D-ribosyl)imidazole-4-carboxamido]succinate + ADP + phosphate + 2 H(+). It functions in the pathway purine metabolism; IMP biosynthesis via de novo pathway; 5-amino-1-(5-phospho-D-ribosyl)imidazole-4-carboxamide from 5-amino-1-(5-phospho-D-ribosyl)imidazole-4-carboxylate: step 1/2. The polypeptide is Phosphoribosylaminoimidazole-succinocarboxamide synthase (Pseudomonas aeruginosa (strain LESB58)).